Consider the following 160-residue polypeptide: SsrA-binding protein (160 aa).

The tract at residues 133–160 (GKKLHDKRDTEKERDWKREQQRLLRDRG) is disordered. Residues 138–160 (DKRDTEKERDWKREQQRLLRDRG) are compositionally biased toward basic and acidic residues.

This sequence belongs to the SmpB family.

It is found in the cytoplasm. Required for rescue of stalled ribosomes mediated by trans-translation. Binds to transfer-messenger RNA (tmRNA), required for stable association of tmRNA with ribosomes. tmRNA and SmpB together mimic tRNA shape, replacing the anticodon stem-loop with SmpB. tmRNA is encoded by the ssrA gene; the 2 termini fold to resemble tRNA(Ala) and it encodes a 'tag peptide', a short internal open reading frame. During trans-translation Ala-aminoacylated tmRNA acts like a tRNA, entering the A-site of stalled ribosomes, displacing the stalled mRNA. The ribosome then switches to translate the ORF on the tmRNA; the nascent peptide is terminated with the 'tag peptide' encoded by the tmRNA and targeted for degradation. The ribosome is freed to recommence translation, which seems to be the essential function of trans-translation. The sequence is that of SsrA-binding protein from Rhizorhabdus wittichii (strain DSM 6014 / CCUG 31198 / JCM 15750 / NBRC 105917 / EY 4224 / RW1) (Sphingomonas wittichii).